Reading from the N-terminus, the 329-residue chain is 4-hydroxythreonine-4-phosphate dehydrogenase (329 aa).

Substrate-binding residues include His136 and Thr137. The a divalent metal cation site is built by His166, His211, and His266. Residues Lys274, Asn283, and Arg292 each contribute to the substrate site.

Belongs to the PdxA family. In terms of assembly, homodimer. Zn(2+) is required as a cofactor. Requires Mg(2+) as cofactor. Co(2+) serves as cofactor.

The protein localises to the cytoplasm. The catalysed reaction is 4-(phosphooxy)-L-threonine + NAD(+) = 3-amino-2-oxopropyl phosphate + CO2 + NADH. Its pathway is cofactor biosynthesis; pyridoxine 5'-phosphate biosynthesis; pyridoxine 5'-phosphate from D-erythrose 4-phosphate: step 4/5. In terms of biological role, catalyzes the NAD(P)-dependent oxidation of 4-(phosphooxy)-L-threonine (HTP) into 2-amino-3-oxo-4-(phosphooxy)butyric acid which spontaneously decarboxylates to form 3-amino-2-oxopropyl phosphate (AHAP). In Escherichia coli (strain 55989 / EAEC), this protein is 4-hydroxythreonine-4-phosphate dehydrogenase.